A 702-amino-acid chain; its full sequence is Methionine--tRNA ligase (702 aa).

The short motif at 14 to 24 is the 'HIGH' region element; sequence PYANGPVHLGH. Zn(2+)-binding residues include C146, C149, C159, and C162. The 'KMSKS' region signature appears at 344-348; the sequence is KFSKS. K347 is an ATP binding site. A tRNA-binding domain is found at 601 to 702; it reads DFQKVDLRVA…GEKINGQSVQ (102 aa).

This sequence belongs to the class-I aminoacyl-tRNA synthetase family. MetG type 1 subfamily. In terms of assembly, homodimer. It depends on Zn(2+) as a cofactor.

The protein localises to the cytoplasm. It catalyses the reaction tRNA(Met) + L-methionine + ATP = L-methionyl-tRNA(Met) + AMP + diphosphate. Functionally, is required not only for elongation of protein synthesis but also for the initiation of all mRNA translation through initiator tRNA(fMet) aminoacylation. This is Methionine--tRNA ligase from Chlorobium luteolum (strain DSM 273 / BCRC 81028 / 2530) (Pelodictyon luteolum).